The chain runs to 128 residues: Leucine-rich single-pass membrane protein 1 (128 aa).

Ser24 carries the post-translational modification Phosphoserine. The helical transmembrane segment at 66-86 threads the bilayer; it reads GLLLVLTVSLALVFFAIFLII. A coiled-coil region spans residues 90 to 111; it reads NQMEDVSRRLTAEGKDIDDLKK.

The protein resides in the membrane. This chain is Leucine-rich single-pass membrane protein 1 (Lsmem1), found in Mus musculus (Mouse).